The following is a 711-amino-acid chain: K(+)-insensitive pyrophosphate-energized proton pump (711 aa).

A run of 5 helical transmembrane segments spans residues 7-27 (LIYG…KFIF), 58-78 (IASL…YGHL), 85-105 (ALSF…CSAL), 145-165 (LAVT…YGGL), and 179-199 (IVGF…GGGI). Lys-202 is a binding site for substrate. Positions 205, 209, and 235 each coordinate Mg(2+). Helical transmembrane passes span 251 to 271 (TAAE…IFGW), 274 to 294 (ILFP…GIFF), 311 to 331 (GYFV…KVML), 343 to 363 (YLLL…FVFL), 403 to 423 (LPVI…EMAI), and 431 to 451 (LYGT…ILAM). Mg(2+) is bound at residue Asp-459. 4 helical membrane passes run 495 to 515 (YAIG…LDEV), 535 to 555 (EVFI…STAI), 602 to 622 (EMVI…VILG), and 624 to 644 (EAAA…ALYL). Residues Asp-652, Asp-678, and Asp-682 each coordinate Ca(2+). Lys-685 lines the substrate pocket. Residues 690-710 (PSLHVLIKLISTITLVFVALF) traverse the membrane as a helical segment.

It belongs to the H(+)-translocating pyrophosphatase (TC 3.A.10) family. K(+)-insensitive subfamily. As to quaternary structure, homodimer. Mg(2+) serves as cofactor.

It localises to the cell membrane. The catalysed reaction is diphosphate + H2O + H(+)(in) = 2 phosphate + 2 H(+)(out). Its function is as follows. Proton pump that utilizes the energy of pyrophosphate hydrolysis as the driving force for proton movement across the membrane. Generates a proton motive force. This is K(+)-insensitive pyrophosphate-energized proton pump from Caldanaerobacter subterraneus subsp. tengcongensis (strain DSM 15242 / JCM 11007 / NBRC 100824 / MB4) (Thermoanaerobacter tengcongensis).